We begin with the raw amino-acid sequence, 271 residues long: Thiamine thiazole synthase (271 aa).

NAD(+) contacts are provided by residues serine 39, glutamate 58–arginine 59, glycine 66, valine 130, and histidine 158–aspartate 160. Aspartate 160 and histidine 175 together coordinate Fe cation. Methionine 225 lines the NAD(+) pocket. Residue arginine 235 coordinates glycine.

The protein belongs to the THI4 family. In terms of assembly, homooctamer; tetramer of dimers. Requires Fe(2+) as cofactor.

It catalyses the reaction hydrogen sulfide + glycine + NAD(+) = ADP-5-ethyl-4-methylthiazole-2-carboxylate + nicotinamide + 3 H2O + H(+). Its pathway is cofactor biosynthesis; thiamine diphosphate biosynthesis. Its function is as follows. Involved in the biosynthesis of the thiazole moiety of thiamine. Catalyzes the conversion of NAD and glycine to adenosine diphosphate 5-(2-hydroxyethyl)-4-methylthiazole-2-carboxylate (ADT), an adenylated thiazole intermediate, using free sulfide as a source of sulfur. The polypeptide is Thiamine thiazole synthase (Metallosphaera sedula (strain ATCC 51363 / DSM 5348 / JCM 9185 / NBRC 15509 / TH2)).